The primary structure comprises 182 residues: Large ribosomal subunit protein uL5 (182 aa).

The protein belongs to the universal ribosomal protein uL5 family. In terms of assembly, part of the 50S ribosomal subunit; part of the 5S rRNA/L5/L18/L25 subcomplex. Contacts the 5S rRNA and the P site tRNA. Forms a bridge to the 30S subunit in the 70S ribosome.

In terms of biological role, this is one of the proteins that bind and probably mediate the attachment of the 5S RNA into the large ribosomal subunit, where it forms part of the central protuberance. In the 70S ribosome it contacts protein S13 of the 30S subunit (bridge B1b), connecting the 2 subunits; this bridge is implicated in subunit movement. Contacts the P site tRNA; the 5S rRNA and some of its associated proteins might help stabilize positioning of ribosome-bound tRNAs. In Borrelia garinii subsp. bavariensis (strain ATCC BAA-2496 / DSM 23469 / PBi) (Borreliella bavariensis), this protein is Large ribosomal subunit protein uL5.